A 124-amino-acid chain; its full sequence is Glycine cleavage system H protein (124 aa).

One can recognise a Lipoyl-binding domain in the interval 22-104 (LIVTGISDHA…YGKGWIYKMK (83 aa)). Position 63 is an N6-lipoyllysine (lysine 63).

This sequence belongs to the GcvH family. The glycine cleavage system is composed of four proteins: P, T, L and H. Requires (R)-lipoate as cofactor.

Functionally, the glycine cleavage system catalyzes the degradation of glycine. The H protein shuttles the methylamine group of glycine from the P protein to the T protein. The chain is Glycine cleavage system H protein from Acinetobacter baylyi (strain ATCC 33305 / BD413 / ADP1).